The sequence spans 345 residues: Holliday junction branch migration complex subunit RuvB (345 aa).

The tract at residues 4–182 is large ATPase domain (RuvB-L); sequence PDRIVSAVQR…FGIPIRLEFY (179 aa). ATP-binding positions include Arg22, Gly63, Lys66, Thr67, Thr68, 129 to 131, Arg172, Tyr182, and Arg219; that span reads EDY. A Mg(2+)-binding site is contributed by Thr67. The small ATPAse domain (RuvB-S) stretch occupies residues 183-253; that stretch reads TVDELQAIVT…IADAALSRLE (71 aa). The interval 256–345 is head domain (RuvB-H); that stretch reads ALGLDQLDRR…QSQINLFEEE (90 aa). The DNA site is built by Arg292, Arg311, and Arg316.

This sequence belongs to the RuvB family. In terms of assembly, homohexamer. Forms an RuvA(8)-RuvB(12)-Holliday junction (HJ) complex. HJ DNA is sandwiched between 2 RuvA tetramers; dsDNA enters through RuvA and exits via RuvB. An RuvB hexamer assembles on each DNA strand where it exits the tetramer. Each RuvB hexamer is contacted by two RuvA subunits (via domain III) on 2 adjacent RuvB subunits; this complex drives branch migration. In the full resolvosome a probable DNA-RuvA(4)-RuvB(12)-RuvC(2) complex forms which resolves the HJ.

The protein localises to the cytoplasm. It carries out the reaction ATP + H2O = ADP + phosphate + H(+). The RuvA-RuvB-RuvC complex processes Holliday junction (HJ) DNA during genetic recombination and DNA repair, while the RuvA-RuvB complex plays an important role in the rescue of blocked DNA replication forks via replication fork reversal (RFR). RuvA specifically binds to HJ cruciform DNA, conferring on it an open structure. The RuvB hexamer acts as an ATP-dependent pump, pulling dsDNA into and through the RuvAB complex. RuvB forms 2 homohexamers on either side of HJ DNA bound by 1 or 2 RuvA tetramers; 4 subunits per hexamer contact DNA at a time. Coordinated motions by a converter formed by DNA-disengaged RuvB subunits stimulates ATP hydrolysis and nucleotide exchange. Immobilization of the converter enables RuvB to convert the ATP-contained energy into a lever motion, pulling 2 nucleotides of DNA out of the RuvA tetramer per ATP hydrolyzed, thus driving DNA branch migration. The RuvB motors rotate together with the DNA substrate, which together with the progressing nucleotide cycle form the mechanistic basis for DNA recombination by continuous HJ branch migration. Branch migration allows RuvC to scan DNA until it finds its consensus sequence, where it cleaves and resolves cruciform DNA. The polypeptide is Holliday junction branch migration complex subunit RuvB (Chelativorans sp. (strain BNC1)).